Reading from the N-terminus, the 249-residue chain is DNA repair protein RecO (249 aa).

The protein belongs to the RecO family.

Involved in DNA repair and RecF pathway recombination. The protein is DNA repair protein RecO of Exiguobacterium sp. (strain ATCC BAA-1283 / AT1b).